Consider the following 294-residue polypeptide: Cell division protein FtsQ (294 aa).

Over 1–26 (MARGPNRRRVDRVPGERRRRLARAMA) the chain is Cytoplasmic. The helical transmembrane segment at 27 to 49 (LALPSILALAALGGAATLGWRVG) threads the bilayer. The Periplasmic portion of the chain corresponds to 50–294 (WKSDLLRVRE…GPQGRSSSLR (245 aa)). The region spanning 55–123 (LRVREIRFEG…PALEVQLAER (69 aa)) is the POTRA domain. The tract at residues 266 to 294 (AGRRGEPDGRSSYAAGGGGGPQGRSSSLR) is disordered.

It belongs to the FtsQ/DivIB family. FtsQ subfamily.

Its subcellular location is the cell inner membrane. Its function is as follows. Essential cell division protein. This chain is Cell division protein FtsQ, found in Anaeromyxobacter sp. (strain K).